Consider the following 209-residue polypeptide: MDETLNDLAAHVSAALSGAVLGSLVAHGELTLQIDPAQIVKVATFLRDDPACLFHCIVDVCGVDYPAREKRFDVVYHLLSLKQNVRIRLKVETDEDTPVPSICSVFPGANWFEREAYDMYGILFTGHPELRRLLTDYGFDGHPLRKDFPTTGFVEVRYDDEQKRVVYEPVRLPQEFRNFDFLSPWEGVEYVLPGDEKASGQPPVPPKAG.

It belongs to the complex I 30 kDa subunit family. In terms of assembly, NDH-1 is composed of 14 different subunits. Subunits NuoB, C, D, E, F, and G constitute the peripheral sector of the complex.

It localises to the cell inner membrane. It carries out the reaction a quinone + NADH + 5 H(+)(in) = a quinol + NAD(+) + 4 H(+)(out). Its function is as follows. NDH-1 shuttles electrons from NADH, via FMN and iron-sulfur (Fe-S) centers, to quinones in the respiratory chain. The immediate electron acceptor for the enzyme in this species is believed to be ubiquinone. Couples the redox reaction to proton translocation (for every two electrons transferred, four hydrogen ions are translocated across the cytoplasmic membrane), and thus conserves the redox energy in a proton gradient. The chain is NADH-quinone oxidoreductase subunit C from Xanthobacter autotrophicus (strain ATCC BAA-1158 / Py2).